The primary structure comprises 60 residues: Large ribosomal subunit protein uL30 (60 aa).

The protein belongs to the universal ribosomal protein uL30 family. Part of the 50S ribosomal subunit.

This Christiangramia forsetii (strain DSM 17595 / CGMCC 1.15422 / KT0803) (Gramella forsetii) protein is Large ribosomal subunit protein uL30.